A 486-amino-acid polypeptide reads, in one-letter code: ATP synthase subunit beta (486 aa).

170-177 (GGAGVGKT) contributes to the ATP binding site.

This sequence belongs to the ATPase alpha/beta chains family. F-type ATPases have 2 components, CF(1) - the catalytic core - and CF(0) - the membrane proton channel. CF(1) has five subunits: alpha(3), beta(3), gamma(1), delta(1), epsilon(1). CF(0) has three main subunits: a(1), b(2) and c(9-12). The alpha and beta chains form an alternating ring which encloses part of the gamma chain. CF(1) is attached to CF(0) by a central stalk formed by the gamma and epsilon chains, while a peripheral stalk is formed by the delta and b chains.

The protein localises to the cell membrane. It carries out the reaction ATP + H2O + 4 H(+)(in) = ADP + phosphate + 5 H(+)(out). Produces ATP from ADP in the presence of a proton gradient across the membrane. The catalytic sites are hosted primarily by the beta subunits. The protein is ATP synthase subunit beta of Clavibacter sepedonicus (Clavibacter michiganensis subsp. sepedonicus).